Here is a 517-residue protein sequence, read N- to C-terminus: ADP-ribosylation factor GTPase-activating protein 3 (517 aa).

Residues 10 to 126 enclose the Arf-GAP domain; sequence LTIFKRLRSV…IKALASQATR (117 aa). A C4-type zinc finger spans residues 25–48; that stretch reads CFDCGAKNPSWASITYGVFLCIDC. The tract at residues 139 to 200 is disordered; sequence VPPSSPPPKE…EQGPSVEGLN (62 aa). Over residues 159–176 the composition is skewed to polar residues; it reads EVSSTGWASAQPEPSLTP. Ser-231 is modified (phosphoserine). Residues 243 to 263 are a coiled coil; that stretch reads NEIEKQAQAVDKMNAQEDLLS. A phosphoserine mark is found at Ser-271 and Ser-275. Residues 291 to 305 are compositionally biased toward basic and acidic residues; that stretch reads EKMNMSGKKKAESER. Disordered stretches follow at residues 291–349 and 362–422; these read EKMN…SDDS and MELR…QKKF. The segment covering 312-333 has biased composition (polar residues); sequence NSRSGISHSVTSDMQTIEQETP. Residue Ser-371 is modified to Phosphoserine. A compositionally biased stretch (basic and acidic residues) spans 379 to 390; that stretch reads YWKKETIKDTDP. Phosphoserine occurs at positions 429, 452, 454, 456, 458, and 459.

The protein localises to the cytoplasm. It is found in the golgi apparatus membrane. GAP activity stimulated by phosphatidylinositol 4,5-bisphosphate (PIP2). In terms of biological role, GTPase-activating protein (GAP) for ADP ribosylation factor 1 (ARF1). Hydrolysis of ARF1-bound GTP may lead to dissociation of coatomer from Golgi-derived membranes to allow fusion with target membranes. In Bos taurus (Bovine), this protein is ADP-ribosylation factor GTPase-activating protein 3.